Reading from the N-terminus, the 175-residue chain is Transcription factor E (175 aa).

Residues 8 to 90 enclose the HTH TFE/IIEalpha-type domain; sequence NDPVIQKYLH…LWTFQYENIP (83 aa).

Belongs to the TFE family. As to quaternary structure, monomer. Interaction with RNA polymerase subunits RpoF and RpoE is necessary for Tfe stimulatory transcription activity. Able to interact with Tbp and RNA polymerase in the absence of DNA promoter. Interacts both with the preinitiation and elongation complexes.

In terms of biological role, transcription factor that plays a role in the activation of archaeal genes transcribed by RNA polymerase. Facilitates transcription initiation by enhancing TATA-box recognition by TATA-box-binding protein (Tbp), and transcription factor B (Tfb) and RNA polymerase recruitment. Not absolutely required for transcription in vitro, but particularly important in cases where Tbp or Tfb function is not optimal. It dynamically alters the nucleic acid-binding properties of RNA polymerases by stabilizing the initiation complex and destabilizing elongation complexes. Seems to translocate with the RNA polymerase following initiation and acts by binding to the non template strand of the transcription bubble in elongation complexes. In Natronomonas pharaonis (strain ATCC 35678 / DSM 2160 / CIP 103997 / JCM 8858 / NBRC 14720 / NCIMB 2260 / Gabara) (Halobacterium pharaonis), this protein is Transcription factor E.